The following is a 498-amino-acid chain: Glycerol kinase (498 aa).

Threonine 12 contributes to the ADP binding site. ATP contacts are provided by threonine 12, threonine 13, and serine 14. Position 12 (threonine 12) interacts with sn-glycerol 3-phosphate. Arginine 16 contacts ADP. The sn-glycerol 3-phosphate site is built by arginine 82, glutamate 83, tyrosine 134, and aspartate 243. Glycerol is bound by residues arginine 82, glutamate 83, tyrosine 134, aspartate 243, and glutamine 244. ADP-binding residues include threonine 265 and glycine 308. ATP-binding residues include threonine 265, glycine 308, glutamine 312, and glycine 412. An ADP-binding site is contributed by glycine 412.

The protein belongs to the FGGY kinase family.

The catalysed reaction is glycerol + ATP = sn-glycerol 3-phosphate + ADP + H(+). It participates in polyol metabolism; glycerol degradation via glycerol kinase pathway; sn-glycerol 3-phosphate from glycerol: step 1/1. With respect to regulation, inhibited by fructose 1,6-bisphosphate (FBP). Functionally, key enzyme in the regulation of glycerol uptake and metabolism. Catalyzes the phosphorylation of glycerol to yield sn-glycerol 3-phosphate. The protein is Glycerol kinase of Rhizobium rhizogenes (strain K84 / ATCC BAA-868) (Agrobacterium radiobacter).